The primary structure comprises 205 residues: Holliday junction branch migration complex subunit RuvA (205 aa).

The segment at Met1–Val64 is domain I. The tract at residues Ala65–Thr143 is domain II. The flexible linker stretch occupies residues Pro144–Glu149. The tract at residues Val150–Thr205 is domain III.

The protein belongs to the RuvA family. As to quaternary structure, homotetramer. Forms an RuvA(8)-RuvB(12)-Holliday junction (HJ) complex. HJ DNA is sandwiched between 2 RuvA tetramers; dsDNA enters through RuvA and exits via RuvB. An RuvB hexamer assembles on each DNA strand where it exits the tetramer. Each RuvB hexamer is contacted by two RuvA subunits (via domain III) on 2 adjacent RuvB subunits; this complex drives branch migration. In the full resolvosome a probable DNA-RuvA(4)-RuvB(12)-RuvC(2) complex forms which resolves the HJ.

It localises to the cytoplasm. In terms of biological role, the RuvA-RuvB-RuvC complex processes Holliday junction (HJ) DNA during genetic recombination and DNA repair, while the RuvA-RuvB complex plays an important role in the rescue of blocked DNA replication forks via replication fork reversal (RFR). RuvA specifically binds to HJ cruciform DNA, conferring on it an open structure. The RuvB hexamer acts as an ATP-dependent pump, pulling dsDNA into and through the RuvAB complex. HJ branch migration allows RuvC to scan DNA until it finds its consensus sequence, where it cleaves and resolves the cruciform DNA. This chain is Holliday junction branch migration complex subunit RuvA, found in Bartonella quintana (strain Toulouse) (Rochalimaea quintana).